The sequence spans 142 residues: Taurine up-regulated 1 protein (142 aa).

An N-terminal signal peptide occupies residues 1-40 (MARPPPLPGLVGRRSGRAVDRAIGWRLFLLLWHPALGAQA). The Extracellular segment spans residues 41-123 (RPPRRAPGGR…ARTQLEGQEG (83 aa)). A helical membrane pass occupies residues 124–140 (AGGWLVVGFLLCLFLLM). Residues 141-142 (PP) lie on the Cytoplasmic side of the membrane.

In terms of tissue distribution, widely expressed in the adult with highest levels in placenta and testis. Also expressed in a number of embryonic tissues at multiple embryonic stages.

Its subcellular location is the nucleus membrane. The protein resides in the mitochondrion membrane. It localises to the cytoplasm. The protein is Taurine up-regulated 1 protein of Mus musculus (Mouse).